The following is a 508-amino-acid chain: MGLPWYRVHTVVLNDPGRLLSVHIMHTALVAGWAGSMALYELAVFDPSDPVLDPMWRQGMFVIPFMTRLGITNSWGGWSITGGTITNPGIWSYEGVAGAHIVFSGLCFLAAIWHWVYWDLEIFCDERTGKPSLDLPKIFGIHLFLSGVACFGFGAFHVTGLYGPGIWVSDPYGLTGKVQPVSPAWGVEGFDPFVPGGIASHHIAAGTLGILAGLFHLSVRPPQRLYKGLRMGNIETVLSSSIAAVFFAAFVVAGTMWYGSATTPIELFGPTRYQWDQGYFQQEIYRRVSAGLAENQSLSEAWSKIPEKLAFYDYIGNNPAKGGLFRAGSMDNGDGIAVGWLGHPIFRDKEGRELFVRRMPTFFETFPVVLVDGDGIVRADVPFRRAESKYSVEQVGVTVEFYGGELNGVSYSDPVTVKKYARRAQLGEIFELDRATLKSDGVFRSSPRGWFTFGHASFALLFFFGHIWHGARTLFRDVFAGIDPDLDAQVEFGAFQKLGDPTTRRQVV.

6 consecutive transmembrane segments (helical) span residues 21-36 (SVHIMHTALVAGWAGS), 101-115 (IVFSGLCFLAAIWHW), 140-156 (GIHLFLSGVACFGFGAF), 203-218 (IAAGTLGILAGLFHLS), 237-252 (VLSSSIAAVFFAAFVV), and 457-472 (SFALLFFFGHIWHGAR).

The protein belongs to the PsbB/PsbC family. PsbB subfamily. In terms of assembly, PSII is composed of 1 copy each of membrane proteins PsbA, PsbB, PsbC, PsbD, PsbE, PsbF, PsbH, PsbI, PsbJ, PsbK, PsbL, PsbM, PsbT, PsbX, PsbY, PsbZ, Psb30/Ycf12, at least 3 peripheral proteins of the oxygen-evolving complex and a large number of cofactors. It forms dimeric complexes. Requires Binds multiple chlorophylls. PSII binds additional chlorophylls, carotenoids and specific lipids. as cofactor.

The protein resides in the plastid. It localises to the chloroplast thylakoid membrane. Functionally, one of the components of the core complex of photosystem II (PSII). It binds chlorophyll and helps catalyze the primary light-induced photochemical processes of PSII. PSII is a light-driven water:plastoquinone oxidoreductase, using light energy to abstract electrons from H(2)O, generating O(2) and a proton gradient subsequently used for ATP formation. This Manihot esculenta (Cassava) protein is Photosystem II CP47 reaction center protein.